A 653-amino-acid chain; its full sequence is Multidomain regulatory protein Rv1364c (653 aa).

Thr-54 and Thr-81 each carry phosphothreonine; by PknD. The 57-residue stretch at 86–142 folds into the PAC domain; it reads SGSEWRLQTDYDGSGVEERYFDFVVTPRRRADGSIEGVQLIVDDVTSRVRARQAAEA. Positions 177-396 constitute a PPM-type phosphatase domain; sequence DIAAEYLVAA…DDVTLLAMQR (220 aa). Mn(2+) is bound by residues Asp-211 and Val-212. Thr-299 bears the Phosphothreonine; by PknD mark. Residues Asp-328 and Asp-387 each contribute to the Mn(2+) site. Position 390 is a phosphothreonine; by PknD (Thr-390). An anti-sigma factor kinase region region spans residues 397-544; it reads RAPTPPLHIT…TMVRRAAFQQ (148 aa). Phosphoserine; by PknD is present on Ser-506. 2 positions are modified to phosphothreonine; by PknD: Thr-520 and Thr-568. An STAS domain is found at 546 to 653; the sequence is IDSEFVSLVE…ADTEDIFAQE (108 aa). Ser-600 bears the Phosphoserine; by autocatalysis mark.

In terms of assembly, exists in solution as both monomer and dimer. Both the phosphorylated and unphosphorylated proteins form extended dimers. Interacts with SigF. Can efficiently bind to SigF independently of its autophosphorylation. Interaction between SigF and Rv1364c is reduced significantly upon the phosphorylation of both proteins by PknD. It depends on Mn(2+) as a cofactor. Mg(2+) is required as a cofactor. In terms of processing, autophosphorylated. Phosphorylated by PknD on multiple threonine and serine residues. Phosphorylation is antagonized by the phosphatase activity.

The enzyme catalyses O-phospho-L-seryl-[protein] + H2O = L-seryl-[protein] + phosphate. The catalysed reaction is O-phospho-L-threonyl-[protein] + H2O = L-threonyl-[protein] + phosphate. It carries out the reaction L-seryl-[protein] + ATP = O-phospho-L-seryl-[protein] + ADP + H(+). It catalyses the reaction L-threonyl-[protein] + ATP = O-phospho-L-threonyl-[protein] + ADP + H(+). The phosphatase domain is activated by the anti-sigma factor kinase domain. Primarily acts as an independent SigF regulator that is sensitive to the osmosensory signal, mediating the cross talk of PknD with the SigF regulon. Possesses both phosphatase and kinase activities. The kinase domain functions as a classic anti-sigma factor-like kinase to phosphorylate the anti-anti-sigma factor domain at the canonical regulatory site, and the phosphatase domain antagonizes this activity. This chain is Multidomain regulatory protein Rv1364c, found in Mycobacterium tuberculosis (strain ATCC 25618 / H37Rv).